Consider the following 417-residue polypeptide: Neuropeptide FF receptor 2 (417 aa).

Residues 1–45 lie on the Extracellular side of the membrane; the sequence is MSEKWDSNSSESWNHIWSGNDTQHHWYSDINITYVNYYLHQPQVA. Residues asparagine 8, asparagine 20, and asparagine 31 are each glycosylated (N-linked (GlcNAc...) asparagine). A helical membrane pass occupies residues 46–66; sequence AVFISSYLLIFVLCMVGNTVV. Residues 67-82 are Cytoplasmic-facing; that stretch reads CFIVIRNRHMHTVTNF. Residues 83 to 103 form a helical membrane-spanning segment; that stretch reads FILNLAISDLLVGIFCMPITL. The Extracellular segment spans residues 104 to 119; it reads LDNIIAGWPFGSSMCK. Cysteine 118 and cysteine 206 are oxidised to a cystine. Residues 120-140 traverse the membrane as a helical segment; sequence ISGLVQGISVAASVFTLVAIA. Topologically, residues 141-160 are cytoplasmic; it reads VDRFRCVVYPFKPKLTVKTA. Residues 161–181 form a helical membrane-spanning segment; that stretch reads FVTIVIIWGLAIAIMTPSAIM. At 182–217 the chain is on the extracellular side; it reads LHVQEEKYYRVRLSSHNKTSTVYWCREDWPRHEMRR. The N-linked (GlcNAc...) asparagine glycan is linked to asparagine 198. A helical membrane pass occupies residues 218–238; sequence IYTTVLFATIYLAPLSLIVIM. Over 239–274 the chain is Cytoplasmic; the sequence is YARIGASLFKTAAHCTGKQRPVQWHVSKKKQKVIKM. The chain crosses the membrane as a helical span at residues 275-295; it reads LLTVALLFILSWLPLWTLMML. Over 296 to 310 the chain is Extracellular; sequence SDYTDLSPNKLRIIN. Residues 311–331 form a helical membrane-spanning segment; that stretch reads IYIYPFAHWLAFCNSSVNPII. Over 332–417 the chain is Cytoplasmic; that stretch reads YGFFNENFRN…MGEATNSTVA (86 aa). Residues 382-401 form a disordered region; the sequence is SQNPGGENLGCGKSADNPTQ.

This sequence belongs to the G-protein coupled receptor 1 family.

The protein resides in the cell membrane. In terms of biological role, receptor for NPAF (A-18-F-amide) and NPFF (F-8-F-amide) neuropeptides, also known as morphine-modulating peptides. Can also be activated by a variety of naturally occurring or synthetic FMRF-amide like ligands. This receptor mediates its action by association with G proteins that activate a phosphatidylinositol-calcium second messenger system. In Mus musculus (Mouse), this protein is Neuropeptide FF receptor 2 (Npffr2).